Consider the following 116-residue polypeptide: Phosphoribosyl-AMP cyclohydrolase (116 aa).

Aspartate 78 is a Mg(2+) binding site. Residue cysteine 79 coordinates Zn(2+). The Mg(2+) site is built by aspartate 80 and aspartate 82. 2 residues coordinate Zn(2+): cysteine 95 and cysteine 102.

The protein belongs to the PRA-CH family. Homodimer. Mg(2+) is required as a cofactor. The cofactor is Zn(2+).

The protein resides in the cytoplasm. It catalyses the reaction 1-(5-phospho-beta-D-ribosyl)-5'-AMP + H2O = 1-(5-phospho-beta-D-ribosyl)-5-[(5-phospho-beta-D-ribosylamino)methylideneamino]imidazole-4-carboxamide. Its pathway is amino-acid biosynthesis; L-histidine biosynthesis; L-histidine from 5-phospho-alpha-D-ribose 1-diphosphate: step 3/9. Functionally, catalyzes the hydrolysis of the adenine ring of phosphoribosyl-AMP. This chain is Phosphoribosyl-AMP cyclohydrolase, found in Acidiphilium cryptum (strain JF-5).